The chain runs to 1123 residues: Rabphilin-1 (1123 aa).

Residues 1–17 (MTKSTKLRHCKQKKKKP) show a composition bias toward basic residues. Disordered stretches follow at residues 1 to 56 (MTKS…GSRS) and 88 to 140 (SAHN…PSTH). The span at 36–46 (DAATTTSTTDA) shows a compositional bias: low complexity. Residues 215 to 341 (KAQTGSITAA…KKSGAWFYKE (127 aa)) enclose the RabBD domain. An FYVE-type zinc finger spans residues 263–328 (GNGVTHCLLC…LCKICSEARE (66 aa)). Zn(2+) contacts are provided by Cys269, Cys272, Cys288, Cys291, Cys296, Cys300, Cys320, and Cys323. Polar residues-rich tracts occupy residues 365–375 (PNASSAATPLS), 387–400 (TMPS…TTPK), 410–428 (PGLQ…GTRR), and 487–497 (ASSSDGESFVQ). Disordered regions lie at residues 365–710 (PNAS…VGSA), 737–779 (TSRA…LRTS), and 796–818 (HIVS…VPIP). Positions 531-541 (SRREANMERFS) are enriched in basic and acidic residues. Residues 563-574 (ESRPSTRSTSPR) show a composition bias toward low complexity. Polar residues-rich tracts occupy residues 605–632 (VVQS…QQQA) and 649–666 (PDRT…TSLV). The span at 742 to 753 (SPLAASSSFLSS) shows a compositional bias: low complexity. Positions 756–768 (DDTKQKNRRRDGV) are enriched in basic and acidic residues. The span at 803-818 (TSSTTSNQNHTSVPIP) shows a compositional bias: low complexity. C2 domains lie at 844-967 (SLGS…NLYL) and 984-1103 (DRGK…RQWI). Ca(2+)-binding residues include Asp875, Asp881, Asp936, Asp938, Asp943, Asp1015, Asp1021, Asp1075, Asp1077, and Asp1083.

It depends on Ca(2+) as a cofactor.

The protein resides in the synapse. Rab-3 effector. In Caenorhabditis elegans, this protein is Rabphilin-1 (rbf-1).